The primary structure comprises 257 residues: Zinc transporter ZupT (257 aa).

The next 8 helical transmembrane spans lie at 5–25 (LILT…GVLG), 32–52 (LLAF…LMEM), 61–81 (GMSP…YLGL), 109–129 (AILL…ATFV), 137–157 (LGFG…LAVV), 171–191 (ILWA…AWLI), 195–215 (MISP…MVAL), and 236–256 (GVLC…TAGI). Residues N120 and E123 each coordinate Fe(2+). Zn(2+) is bound by residues E123 and H148. Fe(2+)-binding residues include N149, E152, and E181. E152 lines the Zn(2+) pocket.

It belongs to the ZIP transporter (TC 2.A.5) family. ZupT subfamily.

It localises to the cell inner membrane. It carries out the reaction Zn(2+)(in) = Zn(2+)(out). Its function is as follows. Mediates zinc uptake. May also transport other divalent cations. This is Zinc transporter ZupT from Shigella dysenteriae serotype 1 (strain Sd197).